The sequence spans 666 residues: Threonine--tRNA ligase (666 aa).

Residues 1–64 (MSDTVSLTFP…VDGKIEIVTR (64 aa)) form the TGS domain. A catalytic region spans residues 245 to 553 (DHRKLGREMD…LIENFAGHMP (309 aa)). Cysteine 347, histidine 398, and histidine 530 together coordinate Zn(2+).

The protein belongs to the class-II aminoacyl-tRNA synthetase family. In terms of assembly, homodimer. Zn(2+) is required as a cofactor.

It localises to the cytoplasm. It carries out the reaction tRNA(Thr) + L-threonine + ATP = L-threonyl-tRNA(Thr) + AMP + diphosphate + H(+). Catalyzes the attachment of threonine to tRNA(Thr) in a two-step reaction: L-threonine is first activated by ATP to form Thr-AMP and then transferred to the acceptor end of tRNA(Thr). Also edits incorrectly charged L-seryl-tRNA(Thr). The protein is Threonine--tRNA ligase of Allorhizobium ampelinum (strain ATCC BAA-846 / DSM 112012 / S4) (Agrobacterium vitis (strain S4)).